The chain runs to 268 residues: Imidazole glycerol phosphate synthase subunit HisF (268 aa).

Catalysis depends on residues Asp12 and Asp131.

The protein belongs to the HisA/HisF family. Heterodimer of HisH and HisF.

Its subcellular location is the cytoplasm. It catalyses the reaction 5-[(5-phospho-1-deoxy-D-ribulos-1-ylimino)methylamino]-1-(5-phospho-beta-D-ribosyl)imidazole-4-carboxamide + L-glutamine = D-erythro-1-(imidazol-4-yl)glycerol 3-phosphate + 5-amino-1-(5-phospho-beta-D-ribosyl)imidazole-4-carboxamide + L-glutamate + H(+). It functions in the pathway amino-acid biosynthesis; L-histidine biosynthesis; L-histidine from 5-phospho-alpha-D-ribose 1-diphosphate: step 5/9. In terms of biological role, IGPS catalyzes the conversion of PRFAR and glutamine to IGP, AICAR and glutamate. The HisF subunit catalyzes the cyclization activity that produces IGP and AICAR from PRFAR using the ammonia provided by the HisH subunit. The sequence is that of Imidazole glycerol phosphate synthase subunit HisF from Methanocorpusculum labreanum (strain ATCC 43576 / DSM 4855 / Z).